The sequence spans 86 residues: U18-theraphotoxin-Cg1a (86 aa).

The signal sequence occupies residues 1–20 (KASVLITLAVLGVMFVWTSA). The propeptide occupies 21–49 (AELEERGSDQRDSPALIKSMAKVFQSEER). Intrachain disulfides connect Cys-51–Cys-65, Cys-58–Cys-70, and Cys-64–Cys-78. Phe-84 bears the Phenylalanine amide mark.

This sequence belongs to the neurotoxin 10 (Hwtx-1) family. 47 subfamily. Expressed by the venom gland.

Its subcellular location is the secreted. In terms of biological role, inhibits TTX-sensitive and TTX-insensitive sodium currents (IC(50) is 0.6 uM and 0.95 uM respectively) on rat dorsal root ganglion (DRG) neurons. Inhibits muscular subtypes sodium channels Nav1.4/SCN4A and Nav1.5/SCN5A transiently transfected in to HEK293 cells (IC(50) is 5.42 uM and 0.45 uM respectively). Also blocks Kv2.1/KCNB1 potassium channels expressed in X.laevis oocytes with an IC(50) of 604 nM. Injection of the toxin in mice was immediately followed by general ataxia, lack of response to stimuli and semiparalysis. This Chilobrachys guangxiensis (Chinese earth tiger tarantula) protein is U18-theraphotoxin-Cg1a.